The primary structure comprises 1188 residues: Probable phosphoenolpyruvate synthase (1188 aa).

A DOD-type homing endonuclease domain is found at 536–670; sequence LGGAVLSDGH…LIVGLYRLGI (135 aa). His-824 functions as the Tele-phosphohistidine intermediate in the catalytic mechanism. Substrate-binding residues include Arg-917, Arg-964, Glu-1061, Gly-1083, Thr-1084, Asn-1085, and Asp-1086. Glu-1061 lines the Mg(2+) pocket. Asp-1086 provides a ligand contact to Mg(2+). Cys-1133 functions as the Proton donor in the catalytic mechanism.

It belongs to the PEP-utilizing enzyme family. Requires Mg(2+) as cofactor. In terms of processing, this protein undergoes a protein self splicing that involves a post-translational excision of the intervening region (intein) followed by peptide ligation.

It catalyses the reaction pyruvate + ATP + H2O = phosphoenolpyruvate + AMP + phosphate + 2 H(+). Its pathway is carbohydrate biosynthesis; gluconeogenesis. Its function is as follows. Catalyzes the phosphorylation of pyruvate to phosphoenolpyruvate. The sequence is that of Probable phosphoenolpyruvate synthase (ppsA) from Methanocaldococcus jannaschii (strain ATCC 43067 / DSM 2661 / JAL-1 / JCM 10045 / NBRC 100440) (Methanococcus jannaschii).